The primary structure comprises 157 residues: Mannose-specific lectin (157 aa).

Positions Met-1–Pro-19 form a signal peptide, or 23; in 70% of the molecules. One can recognise a Bulb-type lectin domain in the interval Asp-24–Gly-132. Positions 49, 51, 53, 57, 60, 61, 64, 65, 67, 80, 82, 84, 88, 95, 96, 99, 106, 112, 114, 116, 120, and 125 each coordinate alpha-D-mannopyranose. Cys-52 and Cys-75 form a disulfide bridge. Residues Thr-129–Lys-157 constitute a propeptide, removed in mature form.

As to quaternary structure, homotetramer.

Its subcellular location is the secreted. Mannose-specific lectin which binds alpha-D-linked mannose. Displays a high affinity for alpha-(1-3)-mannose oligomers. Displays antiviral activity and therefore may contribute to defense against infections. The protein is Mannose-specific lectin of Galanthus nivalis (Common snowdrop).